The sequence spans 131 residues: Small ribosomal subunit protein uS11 (131 aa).

The protein belongs to the universal ribosomal protein uS11 family. In terms of assembly, part of the 30S ribosomal subunit. Interacts with proteins S7 and S18. Binds to IF-3.

Located on the platform of the 30S subunit, it bridges several disparate RNA helices of the 16S rRNA. Forms part of the Shine-Dalgarno cleft in the 70S ribosome. This chain is Small ribosomal subunit protein uS11, found in Helicobacter pylori (strain G27).